Here is a 261-residue protein sequence, read N- to C-terminus: Proteasome subunit alpha type-4 (261 aa).

Residues Ser-13 and Ser-75 each carry the phosphoserine modification. At Lys-127 the chain carries N6-acetyllysine. Position 173 is a phosphoserine (Ser-173). Lys-176 is subject to N6-acetyllysine. A disordered region spans residues 240–261; the sequence is HEEEEAKAEREKKEKEQREKDK.

Belongs to the peptidase T1A family. In terms of assembly, the 26S proteasome consists of a 20S proteasome core and two 19S regulatory subunits. The 20S proteasome core is a barrel-shaped complex made of 28 subunits that are arranged in four stacked rings. The two outer rings are each formed by seven alpha subunits, and the two inner rings are formed by seven beta subunits. The proteolytic activity is exerted by three beta-subunits PSMB5, PSMB6 and PSMB7. Ubiquitous.

Its subcellular location is the cytoplasm. It localises to the nucleus. Functionally, component of the 20S core proteasome complex involved in the proteolytic degradation of most intracellular proteins. This complex plays numerous essential roles within the cell by associating with different regulatory particles. Associated with two 19S regulatory particles, forms the 26S proteasome and thus participates in the ATP-dependent degradation of ubiquitinated proteins. The 26S proteasome plays a key role in the maintenance of protein homeostasis by removing misfolded or damaged proteins that could impair cellular functions, and by removing proteins whose functions are no longer required. Associated with the PA200 or PA28, the 20S proteasome mediates ubiquitin-independent protein degradation. This type of proteolysis is required in several pathways including spermatogenesis (20S-PA200 complex) or generation of a subset of MHC class I-presented antigenic peptides (20S-PA28 complex). This is Proteasome subunit alpha type-4 (Psma4) from Rattus norvegicus (Rat).